Reading from the N-terminus, the 412-residue chain is 23S rRNA (uracil(747)-C(5))-methyltransferase (412 aa).

Positions 63, 69, 72, and 139 each coordinate [4Fe-4S] cluster. Residues glutamine 255, tyrosine 281, glutamate 302, and aspartate 343 each coordinate S-adenosyl-L-methionine. Cysteine 369 (nucleophile) is an active-site residue.

Belongs to the class I-like SAM-binding methyltransferase superfamily. RNA M5U methyltransferase family.

The enzyme catalyses uridine(747) in 23S rRNA + S-adenosyl-L-methionine = 5-methyluridine(747) in 23S rRNA + S-adenosyl-L-homocysteine + H(+). Functionally, catalyzes the formation of 5-methyl-uridine at position equivalent to 747 (m5U747) in 23S rRNA. The sequence is that of 23S rRNA (uracil(747)-C(5))-methyltransferase from Pyrococcus horikoshii (strain ATCC 700860 / DSM 12428 / JCM 9974 / NBRC 100139 / OT-3).